Here is a 198-residue protein sequence, read N- to C-terminus: PEP-dependent dihydroxyacetone kinase 1, ADP-binding subunit DhaL (198 aa).

One can recognise a DhaL domain in the interval 6–194 (DWALRWLNDF…SALLFHAMLQ (189 aa)). Residues aspartate 30, aspartate 35, and aspartate 37 each coordinate Mg(2+). Residues 38-41 (HGIN), 79-80 (AS), glycine 120, methionine 129, arginine 166, and 179-181 (DPG) each bind ADP.

Homodimer. The dihydroxyacetone kinase complex is composed of a homodimer of DhaM, a homodimer of DhaK and the subunit DhaL. Mg(2+) is required as a cofactor.

The protein resides in the cytoplasm. It carries out the reaction dihydroxyacetone + phosphoenolpyruvate = dihydroxyacetone phosphate + pyruvate. It participates in polyol metabolism; glycerol degradation. Functionally, ADP-binding subunit of the dihydroxyacetone kinase, which is responsible for the phosphoenolpyruvate (PEP)-dependent phosphorylation of dihydroxyacetone. DhaL-ADP is converted to DhaL-ATP via a phosphoryl group transfer from DhaM and transmits it to dihydroxyacetone binds to DhaK. The protein is PEP-dependent dihydroxyacetone kinase 1, ADP-binding subunit DhaL of Listeria innocua serovar 6a (strain ATCC BAA-680 / CLIP 11262).